The sequence spans 163 residues: Probable calcium-binding protein CML26 (163 aa).

N-acetylalanine is present on A2. EF-hand domains follow at residues 16–51, 52–82, 85–120, and 121–156; these read STDMELKKVFDKFDANGDGKISVSELGNVFKSMGTS, YTEEELNRVLDEIDIDCDGFINQEEFATICR, SSAVEIREAFDLYDQNKNGLISSSEIHKVLNRLGMT, and CSVEDCVRMIGHVDTDGDGNVNFEEFQKMMSSPELV. The Ca(2+) site is built by D29, N31, D33, K35, E40, D65, D67, D69, E76, D98, N100, N102, E109, D134, D136, D138, N140, and E145.

Its function is as follows. Potential calcium sensor. In Arabidopsis thaliana (Mouse-ear cress), this protein is Probable calcium-binding protein CML26 (CML26).